The sequence spans 180 residues: Large ribosomal subunit protein uL5 (180 aa).

It belongs to the universal ribosomal protein uL5 family. In terms of assembly, part of the 50S ribosomal subunit; part of the 5S rRNA/L5/L18/L25 subcomplex. Contacts the 5S rRNA and the P site tRNA. Forms a bridge to the 30S subunit in the 70S ribosome.

Functionally, this is one of the proteins that bind and probably mediate the attachment of the 5S RNA into the large ribosomal subunit, where it forms part of the central protuberance. In the 70S ribosome it contacts protein S13 of the 30S subunit (bridge B1b), connecting the 2 subunits; this bridge is implicated in subunit movement. Contacts the P site tRNA; the 5S rRNA and some of its associated proteins might help stabilize positioning of ribosome-bound tRNAs. The sequence is that of Large ribosomal subunit protein uL5 from Streptococcus sanguinis (strain SK36).